The primary structure comprises 195 residues: A-type ATP synthase subunit E (195 aa).

This sequence belongs to the V-ATPase E subunit family. As to quaternary structure, has multiple subunits with at least A(3), B(3), C, D, E, F, H, I and proteolipid K(x).

It localises to the cell membrane. Functionally, component of the A-type ATP synthase that produces ATP from ADP in the presence of a proton gradient across the membrane. The chain is A-type ATP synthase subunit E from Halobacterium salinarum (strain ATCC 29341 / DSM 671 / R1).